The chain runs to 378 residues: Alanine dehydrogenase (378 aa).

Residues R15 and K74 each coordinate substrate. The Proton donor/acceptor role is filled by H95. Residues S132, V176–V177, D196, S218, V237–L238, V265–D268, and V297–M300 contribute to the NAD(+) site. The active-site Proton donor/acceptor is D268.

The protein belongs to the AlaDH/PNT family. In terms of assembly, homohexamer. Trimer of dimer.

It localises to the cytoplasm. It carries out the reaction L-alanine + NAD(+) + H2O = pyruvate + NH4(+) + NADH + H(+). The protein operates within amino-acid degradation; L-alanine degradation via dehydrogenase pathway; NH(3) and pyruvate from L-alanine: step 1/1. Catalyzes the reversible oxidative deamination of L-alanine to pyruvate. Oxidative deamination proceeds through a sequential, ordered ternary-binary mechanism, where NAD(+) binds first followed by L-alanine; the products are released in the order ammonia, pyruvate and NADH. Disruption blocks sporulation probably in stage V; 20-30% sporulation can be restored if the media is supplemented with pyruvate, suggesting lack of pyruvate blocks sporulation. Thus it is a key factor in the assimilation of L-alanine as an energy source via the tricarboxylic acid cycle during sporulation. This Bacillus subtilis (strain 168) protein is Alanine dehydrogenase.